We begin with the raw amino-acid sequence, 376 residues long: Chaperone protein DnaJ (376 aa).

The J domain occupies 5-69; it reads DYYEVLGISK…QKRAQYDQYG (65 aa). A CR-type zinc finger spans residues 133 to 215; sequence GKDAEIEIPR…CHGKGRVTKT (83 aa). Zn(2+)-binding residues include Cys-146, Cys-149, Cys-163, Cys-166, Cys-189, Cys-192, Cys-203, and Cys-206. 4 CXXCXGXG motif repeats span residues 146–153, 163–170, 189–196, and 203–210; these read CDTCHGSG, CSHCGGKG, CQYCNGTG, and CSTCHGKG.

It belongs to the DnaJ family. As to quaternary structure, homodimer. Zn(2+) serves as cofactor.

It localises to the cytoplasm. Participates actively in the response to hyperosmotic and heat shock by preventing the aggregation of stress-denatured proteins and by disaggregating proteins, also in an autonomous, DnaK-independent fashion. Unfolded proteins bind initially to DnaJ; upon interaction with the DnaJ-bound protein, DnaK hydrolyzes its bound ATP, resulting in the formation of a stable complex. GrpE releases ADP from DnaK; ATP binding to DnaK triggers the release of the substrate protein, thus completing the reaction cycle. Several rounds of ATP-dependent interactions between DnaJ, DnaK and GrpE are required for fully efficient folding. Also involved, together with DnaK and GrpE, in the DNA replication of plasmids through activation of initiation proteins. This Listeria welshimeri serovar 6b (strain ATCC 35897 / DSM 20650 / CCUG 15529 / CIP 8149 / NCTC 11857 / SLCC 5334 / V8) protein is Chaperone protein DnaJ.